The following is a 906-amino-acid chain: Eukaryotic translation initiation factor 4 gamma 2 (906 aa).

N-acetylmethionine is present on Met-1. A disordered region spans residues Met-1–Lys-71. A Phosphoserine modification is found at Ser-11. An MIF4G domain is found at Phe-78–His-308. Thr-89 is modified (phosphothreonine). Arg-359 is modified (omega-N-methylarginine). Ser-394 bears the Phosphoserine mark. Lys-430 carries the post-translational modification N6-methyllysine. Residue Ser-442 is modified to Phosphoserine. A disordered region spans residues Pro-497 to Lys-540. Residues Pro-502 to Gln-515 are compositionally biased toward polar residues. The residue at position 504 (Arg-504) is an Omega-N-methylarginine. Phosphothreonine is present on residues Thr-507 and Thr-513. The region spanning Glu-542–Glu-665 is the MI domain. Lys-574 is covalently cross-linked (Glycyl lysine isopeptide (Lys-Gly) (interchain with G-Cter in SUMO2)). Residues Glu-719 to Glu-903 form the W2 domain. Ser-901 carries the post-translational modification Phosphoserine.

The protein belongs to the eukaryotic initiation factor 4G family. Interacts with the serine/threonine protein kinases MKNK1 and MKNK2. Binds EIF4A and EIF3. Interacts with MIF4GD. Interacts with DAZAP2. In terms of processing, phosphorylation; hyperphosphorylated during mitosis. In terms of tissue distribution, ubiquitously expressed in all tissues examined.

Functionally, appears to play a role in the switch from cap-dependent to IRES-mediated translation during mitosis, apoptosis and viral infection. Cleaved by some caspases and viral proteases. The chain is Eukaryotic translation initiation factor 4 gamma 2 from Mus musculus (Mouse).